The following is a 257-amino-acid chain: Protein UL133 (257 aa).

Transmembrane regions (helical) follow at residues 14-34 and 45-65; these read WGVP…IWCL and PGIA…AYLI. The segment at 149–232 is disordered; it reads PTVFVPPPSE…AMPQMPPGVA (84 aa). Over residues 164-175 the composition is skewed to pro residues; that stretch reads VIPPQPPTPTSE. Residues 179-193 show a composition bias toward basic residues; it reads KKGRAKDKPKGRPKN. Over residues 214-228 the composition is skewed to pro residues; the sequence is GGPPDASPPAMPQMP.

It is found in the host Golgi apparatus membrane. The sequence is that of Protein UL133 (UL133) from Human cytomegalovirus (strain Merlin) (HHV-5).